Consider the following 268-residue polypeptide: Basic endochitinase CHB4 (268 aa).

A signal peptide spans 1–24; it reads MALTKLSLVLFLCFLGLYSETVKS. The Chitin-binding type-1 domain occupies 25 to 59; the sequence is QNCGCAPNLCCSQFGYCGSTDAYCGTGCRSGPCRS. Intrachain disulfides connect cysteine 27-cysteine 35, cysteine 29-cysteine 41, cysteine 34-cysteine 48, cysteine 52-cysteine 57, cysteine 92-cysteine 137, cysteine 150-cysteine 159, and cysteine 236-cysteine 268. Residues 71 to 268 are catalytic; it reads SVGSIVTQAF…GVDPGPNLSC (198 aa). Glutamate 132 (proton donor) is an active-site residue. N-linked (GlcNAc...) asparagine glycosylation is present at asparagine 265.

This sequence belongs to the glycosyl hydrolase 19 family. Chitinase class I subfamily.

The protein localises to the secreted. The protein resides in the extracellular space. It catalyses the reaction Random endo-hydrolysis of N-acetyl-beta-D-glucosaminide (1-&gt;4)-beta-linkages in chitin and chitodextrins.. Functionally, defense against chitin-containing fungal pathogens. In Brassica napus (Rape), this protein is Basic endochitinase CHB4.